The chain runs to 64 residues: Disintegrin VA6 (64 aa).

The Disintegrin domain maps to 1–64 (NSANPCCDPV…SDCPRNPYKS (64 aa)). 4 cysteine pairs are disulfide-bonded: Cys6–Cys29, Cys20–Cys26, Cys25–Cys50, and Cys38–Cys57. The short motif at 42–44 (RGD) is the Cell attachment site element.

This sequence belongs to the venom metalloproteinase (M12B) family. P-II subfamily. P-IId sub-subfamily. In terms of assembly, homodimer; disulfide-linked. As to expression, expressed by the venom gland.

Its subcellular location is the secreted. Functionally, poor inhibitor of platelet aggregation. The disintegrin inhibits the adhesion of cells expressing the RGD-dependent integrin alpha-5/beta-1 (ITGA5/ITGB1) to immobilized fibronectin. Inhibition on alpha-IIb/beta-3 (ITGA2B/ITGB3) is low, and there is no inhibition on alpha-1/beta-1 (ITGA1/ITGB1), alpha-2/beta-1 (ITGA2/ITGB1) and alpha-6/beta-1 (ITGA6/ITGB1). The polypeptide is Disintegrin VA6 (Vipera ammodytes ammodytes (Western sand viper)).